Here is a 276-residue protein sequence, read N- to C-terminus: Aquaporin-1 (276 aa).

The Cytoplasmic segment spans residues 1 to 10; it reads MLDAEQKKNY. Residues 11–31 form a helical membrane-spanning segment; sequence VAGAFGEFVGTAYFLFMGVGG. The Extracellular portion of the chain corresponds to 32-46; the sequence is AVNFLNNAAGSPLPG. A helical membrane pass occupies residues 47-67; that stretch reads FAIPFCFGFSLFVNVFIWAPI. Over 68-93 the chain is Cytoplasmic; the sequence is SGGVFNPSITIALMATNPKDFPWYRG. The NPA 1 signature appears at 73-75; it reads NPS. A helical membrane pass occupies residues 94-114; sequence ILYIVSQFLGALFGSWLIDLI. Residues 115–133 are Extracellular-facing; that stretch reads QPEAPNAATLLADGVSVAQ. A helical membrane pass occupies residues 134-154; that stretch reads GLFMEMFATSVLTMAVLILAG. Residues 155 to 159 lie on the Cytoplasmic side of the membrane; the sequence is ERYGK. A helical membrane pass occupies residues 160-180; that stretch reads YLAPFGIGMSLFISALCAGPY. Residues 181 to 204 lie on the Extracellular side of the membrane; sequence TGASLNPARTLGPAIVANQYGRAH. The short motif at 186-188 is the NPA 2 element; sequence NPA. A helical membrane pass occupies residues 205 to 225; that stretch reads WIYYVGPTLGSLLAAGYWHIL. The Cytoplasmic portion of the chain corresponds to 226 to 276; sequence RILNIDVVDLKNVLNKCKKCGKEDPRISLKHCEECLKDDPKPEKYDIESQN.

Belongs to the MIP/aquaporin (TC 1.A.8) family.

It is found in the cell membrane. The enzyme catalyses H2O(in) = H2O(out). Its activity is regulated as follows. Polyethylene glycol (PEG) stimulates whereas glycerol inhibits the aquaporin activity. In terms of biological role, water channel required to facilitate the transport of water across membranes. Stimulates plant drought tolerance by facilitating the transport of water from the arbuscular mycorrhiza fungus to host plants. In Rhizophagus irregularis (Arbuscular mycorrhizal fungus), this protein is Aquaporin-1.